The primary structure comprises 467 residues: tRNA(Ile)-lysidine synthase (467 aa).

35–40 is a binding site for ATP; that stretch reads SGGPDS.

Belongs to the tRNA(Ile)-lysidine synthase family.

The protein localises to the cytoplasm. It carries out the reaction cytidine(34) in tRNA(Ile2) + L-lysine + ATP = lysidine(34) in tRNA(Ile2) + AMP + diphosphate + H(+). Ligates lysine onto the cytidine present at position 34 of the AUA codon-specific tRNA(Ile) that contains the anticodon CAU, in an ATP-dependent manner. Cytidine is converted to lysidine, thus changing the amino acid specificity of the tRNA from methionine to isoleucine. The protein is tRNA(Ile)-lysidine synthase of Caldanaerobacter subterraneus subsp. tengcongensis (strain DSM 15242 / JCM 11007 / NBRC 100824 / MB4) (Thermoanaerobacter tengcongensis).